The following is a 226-amino-acid chain: Reticulon-like protein B16 (226 aa).

One can recognise a Reticulon domain in the interval 41–224; it reads AADLLLWRRR…RLSWSLSKDK (184 aa). The next 3 membrane-spanning stretches (helical) occupy residues 54–74, 75–95, and 149–169; these read LGVI…GLPF, LSVS…HARV, and VVIC…CTLL.

Its subcellular location is the endoplasmic reticulum membrane. In Arabidopsis thaliana (Mouse-ear cress), this protein is Reticulon-like protein B16 (RTNLB16).